The primary structure comprises 119 residues: Protein TusC (119 aa).

The protein belongs to the DsrF/TusC family. As to quaternary structure, heterohexamer, formed by a dimer of trimers. The hexameric TusBCD complex contains 2 copies each of TusB, TusC and TusD. The TusBCD complex interacts with TusE.

Its subcellular location is the cytoplasm. Part of a sulfur-relay system required for 2-thiolation of 5-methylaminomethyl-2-thiouridine (mnm(5)s(2)U) at tRNA wobble positions. In Citrobacter koseri (strain ATCC BAA-895 / CDC 4225-83 / SGSC4696), this protein is Protein TusC.